The sequence spans 572 residues: Putative inorganic phosphate transporter C8E4.01c (572 aa).

Residues 1–47 lie on the Cytoplasmic side of the membrane; the sequence is MAFGSKILNIGSKSDEYNDDAVPLDQVEEGAQERRYYLGLTKREFKL. Residues S12 and S14 each carry the phosphoserine modification. A helical membrane pass occupies residues 48–68; that stretch reads MMLAGVGFFLDSYDLFIINLV. Topologically, residues 69–99 are extracellular; sequence TPIFEYLYWGGIEKGPTGKGHYPSGIRGLVN. Residues 100 to 120 traverse the membrane as a helical segment; that stretch reads ASANIGNIFGQLLFGFMGDFF. Over 121 to 123 the chain is Cytoplasmic; it reads GRK. The helical transmembrane segment at 124–144 threads the bilayer; it reads FVYGKEMVIVIIATVLVIAMP. The Extracellular segment spans residues 145 to 153; the sequence is KSIHSPLSK. A helical transmembrane segment spans residues 154 to 174; sequence MMWVFCWRWLLGVGIGGDYPM. The Cytoplasmic portion of the chain corresponds to 175-193; sequence SAAITSERSKIKRRGTLIS. Residues 194 to 214 traverse the membrane as a helical segment; sequence LIFAFQGFGTLAGAIVTIILL. The Extracellular segment spans residues 215-229; sequence GCFEHPLNREGHYHK. The chain crosses the membrane as a helical span at residues 230 to 250; sequence LEGVWRLQFGLALVPAIGVLI. Over 251 to 346 the chain is Cytoplasmic; it reads PRLIMKESKS…TYFRQWRHFK (96 aa). A disordered region spans residues 265–297; the sequence is KALNSAEGKDPKAFFNTDDEDNMKKSSSHGDSE. Residues 286–296 are compositionally biased toward basic and acidic residues; sequence NMKKSSSHGDS. A phosphoserine mark is found at S292 and S296. A helical membrane pass occupies residues 347–367; it reads HLLGTSVCWFLLDIAFYGVNL. The Extracellular segment spans residues 368 to 395; the sequence is NQSVILKNIGFSTGTNEYRTLMKNAIGN. The chain crosses the membrane as a helical span at residues 396–416; sequence LIIAVAGYVPGYWFNVFLVEI. At 417–420 the chain is on the cytoplasmic side; the sequence is LGRK. A helical membrane pass occupies residues 421–441; the sequence is WIQLQGFVITGLMFAILAGRW. Residues 442–449 lie on the Extracellular side of the membrane; sequence NEISTGGR. A helical membrane pass occupies residues 450 to 470; sequence FACFVIAQLFSNFGPNSTTFI. Topologically, residues 471–485 are cytoplasmic; the sequence is YPAEVFPARVRGTAH. A helical transmembrane segment spans residues 486–506; sequence GVSAALGKCGAILASLLFNFL. At 507-508 the chain is on the extracellular side; sequence TG. Residues 509 to 529 traverse the membrane as a helical segment; that stretch reads VIGYGNVMWIFCGCMWGGILF. Residues 530–572 are Cytoplasmic-facing; it reads TLLLPETKGRDADEIDRLELFYGKDGKVQCDSKWKSWYFNGIF.

It belongs to the major facilitator superfamily. Sugar transporter (TC 2.A.1.1) family.

It is found in the membrane. High-affinity transporter for external inorganic phosphate. In Schizosaccharomyces pombe (strain 972 / ATCC 24843) (Fission yeast), this protein is Putative inorganic phosphate transporter C8E4.01c.